Consider the following 450-residue polypeptide: Phosphoglucosamine mutase (450 aa).

The active-site Phosphoserine intermediate is Ser107. 4 residues coordinate Mg(2+): Ser107, Asp246, Asp248, and Asp250. Ser107 carries the post-translational modification Phosphoserine.

Belongs to the phosphohexose mutase family. The cofactor is Mg(2+). Post-translationally, activated by phosphorylation.

It carries out the reaction alpha-D-glucosamine 1-phosphate = D-glucosamine 6-phosphate. Its function is as follows. Catalyzes the conversion of glucosamine-6-phosphate to glucosamine-1-phosphate. In Aromatoleum aromaticum (strain DSM 19018 / LMG 30748 / EbN1) (Azoarcus sp. (strain EbN1)), this protein is Phosphoglucosamine mutase.